Reading from the N-terminus, the 426-residue chain is Cytochrome c biogenesis protein CcsB (426 aa).

Transmembrane regions (helical) follow at residues L14–I34, S72–R92, and L162–S182.

This sequence belongs to the Ccs1/CcsB family. As to quaternary structure, may interact with CcsA.

It is found in the cellular thylakoid membrane. Its function is as follows. Required during biogenesis of c-type cytochromes (cytochrome c6 and cytochrome f) at the step of heme attachment. The sequence is that of Cytochrome c biogenesis protein CcsB from Prochlorococcus marinus (strain NATL1A).